A 495-amino-acid chain; its full sequence is Neuronal acetylcholine receptor subunit beta-4 (495 aa).

The signal sequence occupies residues 1–20; sequence MRGTPLLLVSLFSLLQDGDC. At 21-235 the chain is on the extracellular side; the sequence is RLANAEEKLM…IIKRKPLFYT (215 aa). Residues asparagine 35, asparagine 92, asparagine 137, and asparagine 165 are each glycosylated (N-linked (GlcNAc...) asparagine). Cysteine 152 and cysteine 166 are disulfide-bonded. The chain crosses the membrane as a helical span at residues 236 to 256; that stretch reads INLIIPCVLITSLAILVFYLP. Residues 257-264 are Cytoplasmic-facing; sequence SDCGEKMT. Position 261 (glutamate 261) interacts with Na(+). A helical transmembrane segment spans residues 265 to 285; the sequence is LCISVLLALTFFLLLISKIVP. The Extracellular segment spans residues 286 to 297; it reads PTSLDIPLIGKY. Residues 298–318 traverse the membrane as a helical segment; the sequence is LLFTMVLVTFSIVTTVCVLNV. The Cytoplasmic portion of the chain corresponds to 319–463; sequence HHRSPSTHTM…WKFVAMVVDR (145 aa). A helical transmembrane segment spans residues 464 to 484; sequence LFLWVFVFVCILGTMGLFLPP. The Extracellular segment spans residues 485–495; sequence LFQIHAPSKDS.

Belongs to the ligand-gated ion channel (TC 1.A.9) family. Acetylcholine receptor (TC 1.A.9.1) subfamily. Beta-4/CHRNB4 sub-subfamily. As to quaternary structure, neuronal AChR is composed of two different types of subunits: alpha and beta. CHRNB4/Beta-4 subunit can be combined to CHRNA2/alpha-2, CHRNA3/alpha-3 or CHRNA4/alpha-4, CHRNA5/alpha-5 and CHRNB3/beta-3 to give rise to functional receptors. Forms stoichiometries such as (CHRNA3)2:(CHRNB4)3 or (CHRNA3:CHRNB4)2:CHRNB3. Interacts with RIC3; which is required for proper folding and assembly. Interacts with LYPD6. In terms of tissue distribution, in the brain, it is detected in the medial habenula. In the peripheral nervous system, it is found at least in the adrenal gland.

The protein localises to the synaptic cell membrane. It localises to the cell membrane. The catalysed reaction is Ca(2+)(in) = Ca(2+)(out). It carries out the reaction K(+)(in) = K(+)(out). The enzyme catalyses Na(+)(in) = Na(+)(out). With respect to regulation, activated by a myriad of ligands such as acetylcholine, cytisine, nicotine, choline and epibatidine. nAChR activity is inhibited by the antagonist alpha-conotoxins BuIA and MII, small disulfide-constrained peptides from cone snails. The heteropentamer CHRNA3:CHRNB4 activity is blocked by the alpha-conotoxin ImI and AuIB. In terms of biological role, component of neuronal acetylcholine receptors (nAChRs) that function as pentameric, ligand-gated cation channels with high calcium permeability among other activities. nAChRs are excitatory neurotrasnmitter receptors formed by a collection of nAChR subunits known to mediate synaptic transmission in the nervous system and the neuromuscular junction. Each nAchR subunit confers differential attributes to channel properties, including activation, deactivation and desensitization kinetics, pH sensitivity, cation permeability, and binding to allosteric modulators. CHRNB4 forms heteropentameric neuronal acetylcholine receptors with CHRNA2, CHRNA3 and CHRNA4, as well as CHRNA5 and CHRNB3 as accesory subunits. CHRNA3:CHRNB4 being predominant in neurons of the autonomic ganglia, it is known as ganglionic nicotinic receptor. CHRNA3:CHRNB4 or CHRNA3:CHRNA5:CHRNB4 play also an important role in the habenulo-interpeduncular tract, modulating the mesolimbic dopamine system and affecting reward circuits and addiction. Hypothalamic CHRNA3:CHRNB4 nAChR activation by nicotine leads to activation of POMC neurons and a decrease in food intake. The chain is Neuronal acetylcholine receptor subunit beta-4 (Chrnb4) from Rattus norvegicus (Rat).